Here is a 160-residue protein sequence, read N- to C-terminus: Cyclic pyranopterin monophosphate synthase (160 aa).

Substrate is bound by residues 73–75 and 110–111; these read LCH and ME. Residue Asp-125 is part of the active site.

Belongs to the MoaC family. As to quaternary structure, homohexamer; trimer of dimers.

It catalyses the reaction (8S)-3',8-cyclo-7,8-dihydroguanosine 5'-triphosphate = cyclic pyranopterin phosphate + diphosphate. It functions in the pathway cofactor biosynthesis; molybdopterin biosynthesis. Its function is as follows. Catalyzes the conversion of (8S)-3',8-cyclo-7,8-dihydroguanosine 5'-triphosphate to cyclic pyranopterin monophosphate (cPMP). The sequence is that of Cyclic pyranopterin monophosphate synthase from Pseudomonas paraeruginosa (strain DSM 24068 / PA7) (Pseudomonas aeruginosa (strain PA7)).